We begin with the raw amino-acid sequence, 226 residues long: Putative pyridoxamine 5'-phosphate oxidase (226 aa).

A pyridoxal 5'-phosphate-binding site is contributed by 16-19 (LNSH). 72-75 (RMVL) lines the FMN pocket. K77 provides a ligand contact to pyridoxal 5'-phosphate. FMN-binding positions include 87–88 (YT), 93–94 (RK), and Q116. Residues Y134, R138, and S142 each contribute to the pyridoxal 5'-phosphate site. FMN is bound by residues 151 to 152 (QS) and W199. A pyridoxal 5'-phosphate-binding site is contributed by 205 to 207 (RLH). R209 is a binding site for FMN.

The protein belongs to the pyridoxamine 5'-phosphate oxidase family. In terms of assembly, homodimer. It depends on FMN as a cofactor.

The enzyme catalyses pyridoxamine 5'-phosphate + O2 + H2O = pyridoxal 5'-phosphate + H2O2 + NH4(+). It catalyses the reaction pyridoxine 5'-phosphate + O2 = pyridoxal 5'-phosphate + H2O2. Its pathway is cofactor metabolism; pyridoxal 5'-phosphate salvage; pyridoxal 5'-phosphate from pyridoxamine 5'-phosphate: step 1/1. The protein operates within cofactor metabolism; pyridoxal 5'-phosphate salvage; pyridoxal 5'-phosphate from pyridoxine 5'-phosphate: step 1/1. Catalyzes the oxidation of either pyridoxine 5'-phosphate (PNP) or pyridoxamine 5'-phosphate (PMP) into pyridoxal 5'-phosphate (PLP). In Caenorhabditis elegans, this protein is Putative pyridoxamine 5'-phosphate oxidase.